Consider the following 282-residue polypeptide: MEMO1 family protein Cmaq_1590 (282 aa).

This sequence belongs to the MEMO1 family.

The sequence is that of MEMO1 family protein Cmaq_1590 from Caldivirga maquilingensis (strain ATCC 700844 / DSM 13496 / JCM 10307 / IC-167).